The following is a 509-amino-acid chain: Maturase K (509 aa).

This sequence belongs to the intron maturase 2 family. MatK subfamily.

It is found in the plastid. It localises to the chloroplast. In terms of biological role, usually encoded in the trnK tRNA gene intron. Probably assists in splicing its own and other chloroplast group II introns. This is Maturase K from Galbulimima belgraveana (Northern pigeonberry ash).